The chain runs to 312 residues: uncharacterized protein (312 aa).

The first 28 residues, 1–28 (MNSADTQEPKSFNHTDMWTAFGTTMSGA), serve as a signal peptide directing secretion.

The FAS-operon encodes genes involved in cytokinin production and in host plant fasciation (leafy gall). This is an uncharacterized protein from Rhodococcoides fascians (Rhodococcus fascians).